Reading from the N-terminus, the 178-residue chain is MTEHETQMGLKPRFLVVMGVSGTGKTTVATGLATRLGWHFQEGDALHPPANVEKMSTGQPLTDADRAPWLALCHDWLREQVKAGHGAVLTCSALKRSYREQLRGDDLPIEFVHIDTSTGELADRLQRREGHFMPASLLPSQLATLEVPGDDEPVIRVSGEKHPDVVLEELIRHFQAED.

ATP is bound at residue 19–26 (GVSGTGKT).

The protein belongs to the gluconokinase GntK/GntV family. In terms of assembly, monomer.

The enzyme catalyses D-gluconate + ATP = 6-phospho-D-gluconate + ADP + H(+). Its pathway is carbohydrate acid metabolism; D-gluconate degradation. With respect to regulation, activated by magnesium. Its function is as follows. Phosphorylates gluconate to 6-phosphogluconate. The sequence is that of Gluconokinase from Gluconobacter oxydans (strain 621H) (Gluconobacter suboxydans).